The sequence spans 104 residues: Probable RNA-binding protein PA4753 (104 aa).

The 97-residue stretch at 1-97 (MALTQEQKKQ…NPKPNKNLSN (97 aa)) folds into the CRM domain.

This Pseudomonas aeruginosa (strain ATCC 15692 / DSM 22644 / CIP 104116 / JCM 14847 / LMG 12228 / 1C / PRS 101 / PAO1) protein is Probable RNA-binding protein PA4753.